Consider the following 186-residue polypeptide: Peptidyl-tRNA hydrolase (186 aa).

Tyrosine 14 provides a ligand contact to tRNA. Histidine 19 acts as the Proton acceptor in catalysis. TRNA is bound by residues tyrosine 60 and asparagine 62.

The protein belongs to the PTH family. In terms of assembly, monomer.

It is found in the cytoplasm. The catalysed reaction is an N-acyl-L-alpha-aminoacyl-tRNA + H2O = an N-acyl-L-amino acid + a tRNA + H(+). Its function is as follows. Hydrolyzes ribosome-free peptidyl-tRNAs (with 1 or more amino acids incorporated), which drop off the ribosome during protein synthesis, or as a result of ribosome stalling. Functionally, catalyzes the release of premature peptidyl moieties from peptidyl-tRNA molecules trapped in stalled 50S ribosomal subunits, and thus maintains levels of free tRNAs and 50S ribosomes. This chain is Peptidyl-tRNA hydrolase, found in Mycoplasmopsis pulmonis (strain UAB CTIP) (Mycoplasma pulmonis).